We begin with the raw amino-acid sequence, 138 residues long: Basic phospholipase A2 homolog Ts-K49b (138 aa).

An N-terminal signal peptide occupies residues 1-16; the sequence is MRTLWIMAVLLVGVEG. 6 disulfide bridges follow: C42–C131, C44–C60, C65–C138, C66–C104, C73–C97, and C91–C102. An important for membrane-damaging activities in eukaryotes and bacteria; heparin-binding region spans residues 121–133; the sequence is KKKKINLKLFCKK.

In terms of tissue distribution, expressed by the venom gland.

It is found in the secreted. Functionally, snake venom phospholipase A2 homolog that lacks catalytic activity. It shows myotoxic and weak anticoagulant activities. A model of myotoxic mechanism has been proposed: an apo Lys49-PLA2 is activated by the entrance of a hydrophobic molecule (e.g. fatty acid) at the hydrophobic channel of the protein leading to a reorientation of a monomer. This reorientation causes a transition between 'inactive' to 'active' states, causing alignment of C-terminal and membrane-docking sites (MDoS) side-by-side and putting the membrane-disruption sites (MDiS) in the same plane, exposed to solvent and in a symmetric position for both monomers. The MDoS region stabilizes the toxin on membrane by the interaction of charged residues with phospholipid head groups. Subsequently, the MDiS region destabilizes the membrane with penetration of hydrophobic residues. This insertion causes a disorganization of the membrane, allowing an uncontrolled influx of ions (i.e. calcium and sodium), and eventually triggering irreversible intracellular alterations and cell death. This is Basic phospholipase A2 homolog Ts-K49b from Trimeresurus stejnegeri (Chinese green tree viper).